A 421-amino-acid polypeptide reads, in one-letter code: Accessory Sec system protein translocase subunit SecY2 (421 aa).

10 helical membrane passes run 17-37, 69-89, 102-122, 139-159, 165-185, 204-224, 254-274, 299-319, 358-378, and 383-403; these read LWTS…IPGV, FALG…LTLI, TFLF…IAII, FGAM…LVWL, ILGI…NWPT, VILM…TVVV, PAGG…QYIL, PLGV…FAFI, SFVG…FGII, and TQYA…INII.

This sequence belongs to the SecY/SEC61-alpha family. SecY2 subfamily. As to quaternary structure, component of the accessory SecA2/SecY2 protein translocase complex required to export cell wall proteins. May form heterotrimers with SecE and SecG subunits.

It is found in the cell membrane. Functionally, part of the accessory SecA2/SecY2 system specifically required for export of possible cell wall proteins. The central subunit of a protein translocation channel. The sequence is that of Accessory Sec system protein translocase subunit SecY2 from Leuconostoc gelidum subsp. gasicomitatum (strain DSM 15947 / CCUG 46042 / CECT 5767 / JCM 12535 / LMG 18811 / NBRC 113245 / TB1-10) (Leuconostoc gasicomitatum).